Here is a 141-residue protein sequence, read N- to C-terminus: Nucleoside diphosphate kinase (141 aa).

Positions 11, 59, 87, 93, 104, and 114 each coordinate ATP. Histidine 117 functions as the Pros-phosphohistidine intermediate in the catalytic mechanism.

The protein belongs to the NDK family. Homotetramer. Mg(2+) serves as cofactor.

The protein resides in the cytoplasm. It catalyses the reaction a 2'-deoxyribonucleoside 5'-diphosphate + ATP = a 2'-deoxyribonucleoside 5'-triphosphate + ADP. The enzyme catalyses a ribonucleoside 5'-diphosphate + ATP = a ribonucleoside 5'-triphosphate + ADP. Functionally, major role in the synthesis of nucleoside triphosphates other than ATP. The ATP gamma phosphate is transferred to the NDP beta phosphate via a ping-pong mechanism, using a phosphorylated active-site intermediate. The sequence is that of Nucleoside diphosphate kinase from Histophilus somni (strain 2336) (Haemophilus somnus).